We begin with the raw amino-acid sequence, 238 residues long: Peroxisomal coenzyme A diphosphatase NUDT7 (238 aa).

An N6-succinyllysine modification is found at Lys-20. One can recognise a Nudix hydrolase domain in the interval Tyr-37–Asn-172. The Nudix box motif lies at Lys-77–Gly-98. 2 residues coordinate Mg(2+): Glu-92 and Glu-96. Residues Ser-236–Leu-238 carry the Microbody targeting signal motif.

This sequence belongs to the Nudix hydrolase family. PCD1 subfamily. Monomer. Mn(2+) serves as cofactor. Mg(2+) is required as a cofactor. Expressed in liver, kidney, pancreas, pituitary, small intestine, spleen, heart and placenta. Weakly expressed in brain.

The protein localises to the peroxisome. It catalyses the reaction hexanoyl-CoA + H2O = hexanoyl-4'-phosphopantetheine + adenosine 3',5'-bisphosphate + 2 H(+). It carries out the reaction octanoyl-CoA + H2O = S-octanoyl-4'-phosphopantetheine + adenosine 3',5'-bisphosphate + 2 H(+). The catalysed reaction is butanoyl-CoA + H2O = S-butanoyl-4'-phosphopantetheine + adenosine 3',5'-bisphosphate + 2 H(+). The enzyme catalyses decanoyl-CoA + H2O = decanoyl-4'-phosphopantetheine + adenosine 3',5'-bisphosphate + 2 H(+). It catalyses the reaction dodecanoyl-CoA + H2O = S-dodecanoyl-4'-phosphopantetheine + adenosine 3',5'-bisphosphate + 2 H(+). It carries out the reaction tetradecanoyl-CoA + H2O = tetradecanoyl-4'-phosphopantetheine + adenosine 3',5'-bisphosphate + 2 H(+). The catalysed reaction is choloyl-CoA + H2O = S-choloyl-4'-phosphopantetheine + adenosine 3',5'-bisphosphate + 2 H(+). The enzyme catalyses 3alpha,7alpha,12alpha-trihydroxy-5beta-cholestan-26-oyl-CoA + H2O = 3alpha,7alpha,12alpha-trihydroxy-5beta-cholestan-26-oyl-4'-phosphopantetheine + adenosine 3',5'-bisphosphate + 2 H(+). It catalyses the reaction acetyl-CoA + H2O = S-acetyl-4'-phosphopantetheine + adenosine 3',5'-bisphosphate + 2 H(+). It carries out the reaction CoA + H2O = (R)-4'-phosphopantetheine + adenosine 3',5'-bisphosphate + 2 H(+). The catalysed reaction is propanoyl-CoA + H2O = propanoyl-4'-phosphopantetheine + adenosine 3',5'-bisphosphate + 2 H(+). The enzyme catalyses malonyl-CoA + H2O = malonyl-4'-phosphopantetheine + adenosine 3',5'-bisphosphate + 2 H(+). It catalyses the reaction succinyl-CoA + H2O = succinyl-4'-phosphopantetheine + adenosine 3',5'-bisphosphate + 2 H(+). It carries out the reaction a 5'-end CoA-ribonucleoside in mRNA + H2O = a 5'-end phospho-adenosine-phospho-ribonucleoside in mRNA + (R)-4'-phosphopantetheine + 2 H(+). Inhibited by fluoride. Fatty acyl-coenzyme A (CoA) diphosphatase that hydrolyzes fatty acyl-CoA to yield acyl-4'-phosphopantetheine and adenosine 3',5'-bisphosphate. Cleaves CoA, CoA esters and oxidized CoA with similar efficiencies. Preferentially hydrolyzes medium-chain acyl-CoAs and bile acid-CoAs. Has no activity toward NDP-sugars, CDP-alcohols, (deoxy)nucleoside 5'-triphosphates, nucleoside 5'-di or monophosphates, diadenosine polyphosphates, NAD, NADH, NADP, NADPH or thymidine-5'-monophospho-p-nitrophenyl ester. May be required to eliminate oxidized CoA from peroxisomes, or regulate CoA and acyl-CoA levels in this organelle in response to metabolic demand. Does not play a role in U8 snoRNA decapping activity. Binds U8 snoRNA. Exhibits decapping activity towards dpCoA-capped RNAs in vitro. The polypeptide is Peroxisomal coenzyme A diphosphatase NUDT7 (Homo sapiens (Human)).